The primary structure comprises 381 residues: Probable 26S proteasome regulatory subunit rpn9 (381 aa).

In terms of domain architecture, PCI spans 177–343; the sequence is QYYRHCLLYL…QIVTISSVQS (167 aa).

It belongs to the proteasome subunit S11 family.

Functionally, acts as a regulatory subunit of the 26S proteasome which is involved in the ATP-dependent degradation of ubiquitinated proteins. The sequence is that of Probable 26S proteasome regulatory subunit rpn9 (rpn9) from Schizosaccharomyces pombe (strain 972 / ATCC 24843) (Fission yeast).